The sequence spans 63 residues: Large ribosomal subunit protein uL29 (63 aa).

This sequence belongs to the universal ribosomal protein uL29 family.

The sequence is that of Large ribosomal subunit protein uL29 from Bdellovibrio bacteriovorus (strain ATCC 15356 / DSM 50701 / NCIMB 9529 / HD100).